A 208-amino-acid polypeptide reads, in one-letter code: Type 4 adapter protein LvgA (208 aa).

In terms of assembly, the T4BSS is a complex nanomachine composed of several subcomplexes. This subunit is part of the Type IV Coupling Complex (T4CC), a subcomplex composed of the DotLMNYZ core and the IcmSW-LvgA adapter subunits, linked by the C-terminal tail of DotL. Interacts with DotL, IcmS and IcmW. Interacts with various effector proteins, including VpdB, SetA, PieA and SidH.

It localises to the cytoplasm. Component of the Dot/Icm type IVB secretion system (T4BSS), which is used to inject bacterial effector proteins into eukaryotic host cells. Part of a subcomplex which recruits effector proteins and delivers them to the core transmembrane subcomplex. Is a critical subunit for binding a subset of effector proteins. Recognizes more than one type of binding motif. May be a critical factor that confers host specificity. The sequence is that of Type 4 adapter protein LvgA from Legionella pneumophila subsp. pneumophila (strain Philadelphia 1 / ATCC 33152 / DSM 7513).